A 235-amino-acid polypeptide reads, in one-letter code: Ion-translocating oxidoreductase complex subunit E (235 aa).

Helical transmembrane passes span 63 to 83 (LGLS…ISLF), 93 to 113 (IPIY…LMNA), 117 to 137 (TLYQ…IIIG), 152 to 172 (IWDG…LGAL), and 206 to 226 (SFLL…LLAI).

It belongs to the NqrDE/RnfAE family. The complex is composed of six subunits: RnfA, RnfB, RnfC, RnfD, RnfE and RnfG.

It localises to the cell inner membrane. In terms of biological role, part of a membrane-bound complex that couples electron transfer with translocation of ions across the membrane. The protein is Ion-translocating oxidoreductase complex subunit E of Haemophilus influenzae (strain PittEE).